Reading from the N-terminus, the 119-residue chain is Beta-2-microglobulin (119 aa).

An N-terminal signal peptide occupies residues methionine 1–threonine 20. Positions proline 25–lysine 114 constitute an Ig-like C1-type domain. An intrachain disulfide couples cysteine 45 to cysteine 100.

Belongs to the beta-2-microglobulin family. As to quaternary structure, heterodimer of an alpha chain and a beta chain. Beta-2-microglobulin is the beta-chain of major histocompatibility complex class I molecules.

The protein localises to the secreted. Functionally, component of the class I major histocompatibility complex (MHC). Involved in the presentation of peptide antigens to the immune system. The chain is Beta-2-microglobulin (B2M) from Callicebus personatus personatus (Masked titi).